Reading from the N-terminus, the 244-residue chain is ATP synthase subunit 4, mitochondrial (244 aa).

The N-terminal 35 residues, 1-35, are a transit peptide targeting the mitochondrion; the sequence is MSMSMGVRGLALRSVSKTLFSQGVRCPSMVIGARY. Phosphoserine is present on Ser-144.

The protein belongs to the eukaryotic ATPase B chain family. As to quaternary structure, F-type ATPases have 2 components, CF(1) - the catalytic core - and CF(0) - the membrane proton channel. In yeast, the dimeric form of ATP synthase consists of 17 polypeptides: alpha, beta, gamma, delta, epsilon, 4 (B), 5 (OSCP), 6 (A), 8, 9 (C), d, E (Tim11), f, g, h, i/j and k.

It localises to the mitochondrion. Its subcellular location is the mitochondrion inner membrane. In terms of biological role, mitochondrial membrane ATP synthase (F(1)F(0) ATP synthase or Complex V) produces ATP from ADP in the presence of a proton gradient across the membrane which is generated by electron transport complexes of the respiratory chain. F-type ATPases consist of two structural domains, F(1) - containing the extramembraneous catalytic core, and F(0) - containing the membrane proton channel, linked together by a central stalk and a peripheral stalk. During catalysis, ATP synthesis in the catalytic domain of F(1) is coupled via a rotary mechanism of the central stalk subunits to proton translocation. Part of the complex F(0) domain and the peripheric stalk, which acts as a stator to hold the catalytic alpha(3)beta(3) subcomplex and subunit a/ATP6 static relative to the rotary elements. The sequence is that of ATP synthase subunit 4, mitochondrial (ATP4) from Saccharomyces cerevisiae (strain ATCC 204508 / S288c) (Baker's yeast).